Here is a 64-residue protein sequence, read N- to C-terminus: Movement protein TGBp3 (64 aa).

The Lumenal portion of the chain corresponds to 1-4 (MRSV). A helical membrane pass occupies residues 5–27 (ALTLCAIIAGYLLVSNLQNVFSP). The Cytoplasmic segment spans residues 28-64 (EVCTLVITGESIRINGCNLSPAHFRAISHLKVLQIHL).

It belongs to the Tymovirales TGBp3 protein family.

It localises to the host endoplasmic reticulum membrane. Its function is as follows. Plays a role in viral cell-to-cell propagation, by facilitating genome transport to neighboring plant cells through plasmosdesmata. May induce the formation of granular vesicles derived from the Endoplasmic reticulum, which align on actin filaments. This is Movement protein TGBp3 from Lily symptomless virus (LSV).